The chain runs to 557 residues: Potassium-transporting ATPase potassium-binding subunit (557 aa).

A run of 12 helical transmembrane segments spans residues 5–25 (GFLL…PLGS), 63–83 (LSAI…MLLG), 132–152 (GLTV…FALI), 170–190 (LLRI…LFFI), 253–273 (FVQM…FGEV), 283–303 (LLWA…WAEV), 329–349 (VLVS…AVIA), 356–376 (ALGG…FGGV), 379–399 (GLYG…LMIG), 416–436 (LTAL…ALAM), 484–504 (LLAL…MAIA), and 526–546 (LFVG…FIPA).

Belongs to the KdpA family. In terms of assembly, the system is composed of three essential subunits: KdpA, KdpB and KdpC.

The protein resides in the cell inner membrane. Its function is as follows. Part of the high-affinity ATP-driven potassium transport (or Kdp) system, which catalyzes the hydrolysis of ATP coupled with the electrogenic transport of potassium into the cytoplasm. This subunit binds the periplasmic potassium ions and delivers the ions to the membrane domain of KdpB through an intramembrane tunnel. In Escherichia coli O127:H6 (strain E2348/69 / EPEC), this protein is Potassium-transporting ATPase potassium-binding subunit.